A 170-amino-acid polypeptide reads, in one-letter code: Adenine phosphoribosyltransferase (170 aa).

This sequence belongs to the purine/pyrimidine phosphoribosyltransferase family. In terms of assembly, homodimer.

It localises to the cytoplasm. The enzyme catalyses AMP + diphosphate = 5-phospho-alpha-D-ribose 1-diphosphate + adenine. Its pathway is purine metabolism; AMP biosynthesis via salvage pathway; AMP from adenine: step 1/1. Functionally, catalyzes a salvage reaction resulting in the formation of AMP, that is energically less costly than de novo synthesis. The protein is Adenine phosphoribosyltransferase of Pseudothermotoga lettingae (strain ATCC BAA-301 / DSM 14385 / NBRC 107922 / TMO) (Thermotoga lettingae).